A 189-amino-acid chain; its full sequence is Peptidyl-tRNA hydrolase (189 aa).

TRNA is bound at residue Tyr-15. The active-site Proton acceptor is the His-20. The tRNA site is built by Phe-64 and Asn-66.

The protein belongs to the PTH family. In terms of assembly, monomer.

The protein localises to the cytoplasm. It carries out the reaction an N-acyl-L-alpha-aminoacyl-tRNA + H2O = an N-acyl-L-amino acid + a tRNA + H(+). Hydrolyzes ribosome-free peptidyl-tRNAs (with 1 or more amino acids incorporated), which drop off the ribosome during protein synthesis, or as a result of ribosome stalling. In terms of biological role, catalyzes the release of premature peptidyl moieties from peptidyl-tRNA molecules trapped in stalled 50S ribosomal subunits, and thus maintains levels of free tRNAs and 50S ribosomes. In Persephonella marina (strain DSM 14350 / EX-H1), this protein is Peptidyl-tRNA hydrolase.